Reading from the N-terminus, the 63-residue chain is Large ribosomal subunit protein uL29 (63 aa).

Belongs to the universal ribosomal protein uL29 family.

This is Large ribosomal subunit protein uL29 from Shewanella pealeana (strain ATCC 700345 / ANG-SQ1).